The chain runs to 430 residues: Asparagine--tRNA ligase (430 aa).

This sequence belongs to the class-II aminoacyl-tRNA synthetase family. In terms of assembly, homodimer.

Its subcellular location is the cytoplasm. It catalyses the reaction tRNA(Asn) + L-asparagine + ATP = L-asparaginyl-tRNA(Asn) + AMP + diphosphate + H(+). This chain is Asparagine--tRNA ligase, found in Staphylococcus saprophyticus subsp. saprophyticus (strain ATCC 15305 / DSM 20229 / NCIMB 8711 / NCTC 7292 / S-41).